The chain runs to 122 residues: Large ribosomal subunit protein uL14c (122 aa).

Belongs to the universal ribosomal protein uL14 family. In terms of assembly, part of the 50S ribosomal subunit.

The protein resides in the plastid. Its subcellular location is the chloroplast. In terms of biological role, binds to 23S rRNA. The protein is Large ribosomal subunit protein uL14c of Lepidium virginicum (Virginia pepperweed).